A 594-amino-acid polypeptide reads, in one-letter code: Proteasome-associated ATPase (594 aa).

The stretch at Asp20 to Pro98 forms a coiled coil. An ATP-binding site is contributed by Gly282 to Leu287. A docks into pockets in the proteasome alpha-ring region spans residues Tyr593 to Leu594.

It belongs to the AAA ATPase family. As to quaternary structure, homohexamer. Assembles into a hexameric ring structure that caps the 20S proteasome core. Strongly interacts with the prokaryotic ubiquitin-like protein Pup through a hydrophobic interface; the interacting region of ARC lies in its N-terminal coiled-coil domain. There is one Pup binding site per ARC hexamer ring. Upon ATP-binding, the C-terminus of ARC interacts with the alpha-rings of the proteasome core, possibly by binding to the intersubunit pockets.

Its pathway is protein degradation; proteasomal Pup-dependent pathway. Its function is as follows. ATPase which is responsible for recognizing, binding, unfolding and translocation of pupylated proteins into the bacterial 20S proteasome core particle. May be essential for opening the gate of the 20S proteasome via an interaction with its C-terminus, thereby allowing substrate entry and access to the site of proteolysis. Thus, the C-termini of the proteasomal ATPase may function like a 'key in a lock' to induce gate opening and therefore regulate proteolysis. The protein is Proteasome-associated ATPase of Catenulispora acidiphila (strain DSM 44928 / JCM 14897 / NBRC 102108 / NRRL B-24433 / ID139908).